The primary structure comprises 123 residues: Large ribosomal subunit protein eL8 (123 aa).

This sequence belongs to the eukaryotic ribosomal protein eL8 family. As to quaternary structure, part of the 50S ribosomal subunit. Probably part of the RNase P complex.

The protein resides in the cytoplasm. In terms of biological role, multifunctional RNA-binding protein that recognizes the K-turn motif in ribosomal RNA, the RNA component of RNase P, box H/ACA, box C/D and box C'/D' sRNAs. The chain is Large ribosomal subunit protein eL8 from Pyrococcus abyssi (strain GE5 / Orsay).